We begin with the raw amino-acid sequence, 3096 residues long: Unconventional myosin-XVB (3096 aa).

Disordered regions lie at residues 1 to 330, 389 to 489, 508 to 540, and 553 to 649; these read MGRN…GPED, RPPE…GWGR, GGMPRASPGGRSPQVPTSPVPGDPFDQEDETPD, and AGRA…GPRL. Over residues 19 to 33 the composition is skewed to low complexity; that stretch reads ASGEQESGSASADGA. Residues 34-50 show a composition bias toward basic and acidic residues; sequence PSRERRSDRGQADRAKP. A compositionally biased stretch (basic residues) spans 124–143; the sequence is RRRRKRKDKGPSARRGRRTP. Basic and acidic residues-rich tracts occupy residues 212 to 222 and 261 to 288; these read DWPHADTRGRE and TFEDSSRAPRDTGPAKDASDNRAQRGAE. A compositionally biased stretch (low complexity) spans 307-330; that stretch reads AVGQVPAAAGEGEAGAAAGAGPED. Residues 406–416 are compositionally biased toward basic and acidic residues; the sequence is WGRRKPDEGRG. Basic residues predominate over residues 417–426; the sequence is HGRGSKGRGR. Over residues 427–489 the composition is skewed to basic and acidic residues; sequence GKADEGRGHE…HQRGYEGWGR (63 aa). The Myosin motor domain maps to 720–1394; the sequence is EDMEDLARLR…GWQRLEELRD (675 aa). 818–825 contributes to the ATP binding site; that stretch reads GHSGSGKT. The segment at 1273–1295 is actin-binding; it reads LEDLIARLGRSHVYFIQCLTPNP. The region spanning 1414–1443 is the IQ domain; sequence RQRVLPRMQARMRGFQARKRYLRRRAALGQ. In terms of domain architecture, MyTH4 1 spans 1551-1702; sequence RPGQPLAKPL…PTQLEWLAGW (152 aa). 3 disordered regions span residues 1802–1833, 1963–2026, and 2040–2262; these read PGIQAPSLPPGPPPGPAPTLPSRDHTGEVQRS, MQQR…PKSF, and QITV…LPED. Pro residues predominate over residues 1808–1820; the sequence is SLPPGPPPGPAPT. Over residues 1963 to 1980 the composition is skewed to low complexity; the sequence is MQQRQQQARASEAASQAS. Residues 2059–2076 are compositionally biased toward acidic residues; sequence AQEEEEEEEEEEEQEEQE. Over residues 2102–2116 the composition is skewed to basic and acidic residues; it reads APKEAEAEPAKETAA. The segment covering 2159–2170 has biased composition (pro residues); the sequence is GPVPVPVQPSRP. Positions 2176–2185 are enriched in basic and acidic residues; the sequence is RKIDPKDEAL. Pro residues-rich tracts occupy residues 2199-2217 and 2247-2261; these read MLSPSPGKGPPPAVAPRPK and HTPPPPPAPPLPLPE. The region spanning 2481-2542 is the SH3 domain; it reads KDSGYVIALR…PADIVQPAAA (62 aa). The tract at residues 2548 to 2567 is disordered; sequence SKEQRSGWHKGQLSNGEPGL. Residues 2643 to 2789 form the MyTH4 2 domain; the sequence is YTKAPIQESL…PPPGEMKAFL (147 aa). Residues 2795–3096 form the FERM domain; sequence RLLLIHLPGG…ASCTEWPSIN (302 aa).

This sequence belongs to the TRAFAC class myosin-kinesin ATPase superfamily. Myosin family. As to expression, detected in brain, stomach and kidney.

The protein resides in the cytoplasm. The polypeptide is Unconventional myosin-XVB (Homo sapiens (Human)).